An 81-amino-acid polypeptide reads, in one-letter code: Neurotoxin LmNaTx11.1 (81 aa).

Residues 1–18 (MKIVIIFFIAMMAVGVYS) form the signal peptide. The 62-residue stretch at 19 to 80 (KDGYLVKKNG…PTYPSSKTCS (62 aa)) folds into the LCN-type CS-alpha/beta domain. Cystine bridges form between C29–C79, C33–C56, C42–C61, and C46–C63.

This sequence belongs to the long (4 C-C) scorpion toxin superfamily. Sodium channel inhibitor family. Beta subfamily. In terms of tissue distribution, expressed by the venom gland.

The protein resides in the secreted. Binds voltage-independently at site-4 of sodium channels (Nav) and shift the voltage of activation toward more negative potentials thereby affecting sodium channel activation and promoting spontaneous and repetitive firing. The chain is Neurotoxin LmNaTx11.1 from Lychas mucronatus (Chinese swimming scorpion).